The following is a 324-amino-acid chain: MWRLLHCILGFIRLYLDGVKVLLYQLFNKSFRLPDLPEQNGKVAIVTGGTRGMGYEISRHLVSLDMHVIIAGNEEEEGLAAVKKIQEELNQGKVEFMYLDLASLTSVRQFVQRYNAKGLPLHVLVNNAGVMLVPERRTEDGFELHFGLNYLGHFLLTNLLLGALRKTGKPGKCSRIVIMSSATHYGGRLTLDDLQGRLCYSSHAAYAQSKLALLLLSYHLQEQLLVRGDPVTVNAVDPGMVDTALYDNLCSPAQVAKKPFAKLLFRTPAEGASTAIYAAAASELEGIGGLYLYNGRKTESSALSYDKRLQTKLWKQSCALVGLK.

Tyr-206 functions as the Proton acceptor in the catalytic mechanism. NAD(+) is bound by residues Tyr-206, Lys-210, and Thr-243.

This sequence belongs to the short-chain dehydrogenases/reductases (SDR) family.

The protein localises to the lipid droplet. The catalysed reaction is a di-trans,poly-cis-polyprenol + NAD(+) = a di-trans,poly-cis-polyprenal + NADH + H(+). It carries out the reaction a di-trans,poly-cis-polyprenol + NADP(+) = a di-trans,poly-cis-polyprenal + NADPH + H(+). It catalyses the reaction a di-trans,poly-cis-dolichol + NADP(+) = a di-trans,poly-cis-dolichal + NADPH + H(+). The enzyme catalyses a di-trans,poly-cis-dolichol + NAD(+) = a di-trans,poly-cis-dolichal + NADH + H(+). It participates in protein modification; protein glycosylation. In terms of biological role, oxidoreductase that plays a key role in early steps of protein N-linked glycosylation by mediating two non-consecutive steps in dolichol biosynthesis. Acts both as a NAD(+)-dependent dehydrogenase and as a NADPH-dependent reductase during the conversion of polyprenol into dolichol. First catalyzes the NAD(+)-dependent dehydrogenation of polyprenol into polyprenal; polyprenal is then reduced into dolichal by srd5a3. It then catalyzes the NADPH-dependent reduction of dolichal into dolichol. This is Polyprenol dehydrogenase from Danio rerio (Zebrafish).